Consider the following 960-residue polypeptide: Gamma-aminobutyric acid type B receptor subunit 1 (960 aa).

The first 19 residues, 1–19, serve as a signal peptide directing secretion; sequence MLLLLLVPLFLRPLGAGGA. Residues 20–590 lie on the Extracellular side of the membrane; that stretch reads QTPNATSEGC…KTFRFLSQKL (571 aa). 2 N-linked (GlcNAc...) asparagine glycosylation sites follow: Asn23 and Asn83. 2 Sushi domains span residues 29–95 and 97–158; these read CQII…PSRC and RICS…HCQV. Disulfide bonds link Cys99/Cys144, Cys130/Cys156, and Cys219/Cys245. Residues Ser246, Ser269, His286, and Tyr366 each contribute to the 4-aminobutanoate site. A disulfide bridge connects residues Cys375 and Cys409. 2 N-linked (GlcNAc...) asparagine glycosylation sites follow: Asn408 and Asn439. Glu465 lines the 4-aminobutanoate pocket. Asn481, Asn501, and Asn513 each carry an N-linked (GlcNAc...) asparagine glycan. The helical transmembrane segment at 591-611 threads the bilayer; the sequence is FISVSVLSSLGIVLAVVCLSF. At 612–630 the chain is on the cytoplasmic side; that stretch reads NIYNSHVRYIQNSQPNLNN. A helical membrane pass occupies residues 631-651; that stretch reads LTAVGCSLALAAVFPLGLDGY. Topologically, residues 652–666 are extracellular; sequence HIGRSQFPFVCQARL. Residues 667-687 form a helical membrane-spanning segment; it reads WLLGLGFSLGYGSMFTKIWWV. Topologically, residues 688 to 709 are cytoplasmic; that stretch reads HTVFTKKEEKKEWRKTLEPWKL. The chain crosses the membrane as a helical span at residues 710-730; sequence YATVGLLVGMDVLTLAIWQIV. Over 731–767 the chain is Extracellular; that stretch reads DPLHRTIETFAKEEPKEDIDVSILPQLEHCSSKKMNT. The chain crosses the membrane as a helical span at residues 768-788; that stretch reads WLGIFYGYKGLLLLLGIFLAY. The Cytoplasmic segment spans residues 789-803; sequence ETKSVSTEKINDHRA. Residues 804–824 traverse the membrane as a helical segment; it reads VGMAIYNVAVLCLITAPVTMI. The Extracellular portion of the chain corresponds to 825-832; sequence LSSQQDAA. Residues 833-853 form a helical membrane-spanning segment; that stretch reads FAFASLAIVFSSYITLVVLFV. Over 854-960 the chain is Cytoplasmic; the sequence is PKMRRLITRG…DGSRVHLLYK (107 aa). The segment covering 866–879 has biased composition (polar residues); the sequence is QSETQDTMKTGSST. Disordered regions lie at residues 866–891 and 908–960; these read QSET…RLLE and VSEL…LLYK. A coiled-coil region spans residues 870–924; the sequence is QDTMKTGSSTNNNEEEKSRLLEKENRELEKIIAEKEERVSELRHQLQSRQQLRSR. Residue Thr872 is modified to Phosphothreonine. Positions 887 to 915 are interaction with ATF4; it reads SRLLEKENRELEKIIAEKEERVSELRHQL. Thr929 is modified (phosphothreonine).

Belongs to the G-protein coupled receptor 3 family. GABA-B receptor subfamily. As to quaternary structure, heterodimer of GABBR1 and GABBR2. Homodimers may form, but are inactive. Interacts (via C-terminus) with ATF4 (via leucine zipper domain). Interacts with JAKMIP1. In terms of tissue distribution, ubiquitously expressed in tissues including the forebrain, cerebellum, eye, atrium, ventricle, lung, stomach, small intestine, colon, liver, spleen, kidney, urinary bladder and skeletal muscle. Expressed at low levels in testis, and more highly in brain regions. Expression is high the brain regions including cerebral cortical layers, with higher expression in VIb than in the II-V layers, pyramidal CA1-CA3 cell layers and granular cell layers of the hippocampus, granular cell layers of the dentate gyrus, including the caudate, putamen, nucleus accumbens and olfactory tubercle, the granular layer cell layers of the medial habenula, in the cerebellum, predominantly in Purkinje cells, and in the granule cell layer. Also expressed in areas of the brain including the medial geniculate nucleus, substantia nigra, pars compacta, the ventral tegmental area, and in several thalamic, amygdaloid and hypothalamic nuclei, such as the arcuate nucleus of the hypothalamus and mammilary bodies of the hypothalamus. Expressed in the amacrine cell of the retina. Expressed in the brain, spinal cord, stomach, testis, adrenal gland, pituitary, spleen and prostate. As to expression, expressed in the brain, spinal cord, stomach, testis, kidney and liver. In terms of tissue distribution, ubiquitously expressed. Expressed in the forebrain, cerebellum, eye, kidney and urinary bladder. As to expression, ubiquitously expressed with high expression in the pyramidal CA1-CA3 cell layers of the hippocampus, the granule cell layers of the dentate gyrus and olfactory tubercle, the whole cortex, and Purkinje cells of the cerebellum. Moderate expression in the granule cell layer of the cerebellum.

The protein resides in the cell membrane. It localises to the postsynaptic cell membrane. The protein localises to the cell projection. It is found in the dendrite. Its subcellular location is the perikaryon. Component of a heterodimeric G-protein coupled receptor for GABA, formed by GABBR1 and GABBR2. Within the heterodimeric GABA receptor, only GABBR1 seems to bind agonists, while GABBR2 mediates coupling to G proteins. Ligand binding causes a conformation change that triggers signaling via guanine nucleotide-binding proteins (G proteins) and modulates the activity of down-stream effectors, such as adenylate cyclase. Signaling inhibits adenylate cyclase, stimulates phospholipase A2, activates potassium channels, inactivates voltage-dependent calcium-channels and modulates inositol phospholipid hydrolysis. Calcium is required for high affinity binding to GABA. Plays a critical role in the fine-tuning of inhibitory synaptic transmission. Pre-synaptic GABA receptor inhibits neurotransmitter release by down-regulating high-voltage activated calcium channels, whereas postsynaptic GABA receptor decreases neuronal excitability by activating a prominent inwardly rectifying potassium (Kir) conductance that underlies the late inhibitory postsynaptic potentials. Not only implicated in synaptic inhibition but also in hippocampal long-term potentiation, slow wave sleep, muscle relaxation and antinociception. The polypeptide is Gamma-aminobutyric acid type B receptor subunit 1 (Gabbr1) (Rattus norvegicus (Rat)).